Here is a 360-residue protein sequence, read N- to C-terminus: Geranylgeranyl pyrophosphate synthase 12, chloroplastic (360 aa).

The N-terminal 39 residues, 1–39 (MANTVHLSSSSLFIQTRGRKYNSILSFNNLQKRTVLSLS), are a transit peptide targeting the chloroplast. Isopentenyl diphosphate is bound by residues Lys-106, Arg-109, and His-138. Residues Asp-145 and Asp-151 each contribute to the Mg(2+) site. Dimethylallyl diphosphate is bound at residue Arg-156. Arg-157 serves as a coordination point for isopentenyl diphosphate. Dimethylallyl diphosphate-binding residues include Lys-245, Thr-246, Gln-283, Lys-300, and Lys-310.

Belongs to the FPP/GGPP synthase family. In terms of assembly, monomer. It depends on Mg(2+) as a cofactor.

Its subcellular location is the plastid. It is found in the chloroplast. It catalyses the reaction isopentenyl diphosphate + dimethylallyl diphosphate = (2E)-geranyl diphosphate + diphosphate. The enzyme catalyses isopentenyl diphosphate + (2E)-geranyl diphosphate = (2E,6E)-farnesyl diphosphate + diphosphate. It carries out the reaction isopentenyl diphosphate + (2E,6E)-farnesyl diphosphate = (2E,6E,10E)-geranylgeranyl diphosphate + diphosphate. Its pathway is isoprenoid biosynthesis; farnesyl diphosphate biosynthesis; farnesyl diphosphate from geranyl diphosphate and isopentenyl diphosphate: step 1/1. It functions in the pathway isoprenoid biosynthesis; geranyl diphosphate biosynthesis; geranyl diphosphate from dimethylallyl diphosphate and isopentenyl diphosphate: step 1/1. The protein operates within isoprenoid biosynthesis; geranylgeranyl diphosphate biosynthesis; geranylgeranyl diphosphate from farnesyl diphosphate and isopentenyl diphosphate: step 1/1. Its function is as follows. Catalyzes the trans-addition of the three molecules of IPP onto DMAPP to form geranylgeranyl pyrophosphate. This is Geranylgeranyl pyrophosphate synthase 12, chloroplastic from Arabidopsis thaliana (Mouse-ear cress).